We begin with the raw amino-acid sequence, 925 residues long: Ectonucleotide pyrophosphatase/phosphodiesterase family member 1 (925 aa).

Gly residues predominate over residues 1-17; the sequence is MERDGCAGGGSRGGEGG. Positions 1–43 are disordered; the sequence is MERDGCAGGGSRGGEGGRAPREGPAGNGRDRGRSHAAEAPGDP. The Cytoplasmic segment spans residues 1–76; sequence MERDGCAGGG…RTAKDPNTYK (76 aa). Positions 45-52 match the Di-leucine motif motif; it reads AAASLLAP. The chain crosses the membrane as a helical; Signal-anchor for type II membrane protein span at residues 77–97; the sequence is VLSLVLSVCVLTTILGCIFGL. The Extracellular segment spans residues 98–925; that stretch reads KPSCAKEVKS…THLPTFSQED (828 aa). SMB domains follow at residues 104-144 and 145-189; these read EVKS…IEPE and HIWT…GEKS. Intrachain disulfides connect C108–C122, C112–C140, C120–C133, C126–C132, C149–C166, C154–C184, C164–C177, C170–C176, C195–C241, and C203–C415. N-linked (GlcNAc...) asparagine glycosylation occurs at N179. The interval 191 to 591 is phosphodiesterase; the sequence is VEEPCESINE…APNNGTHGSL (401 aa). 3 residues coordinate AMP: D218, T256, and N277. D218 and T256 together coordinate Zn(2+). T256 serves as the catalytic AMP-threonine intermediate. The CMP site is built by T256 and N277. Residues T256 and N277 each coordinate dTMP. Residues T256 and N277 each coordinate GMP. T256 is subject to Phosphothreonine. N285 carries N-linked (GlcNAc...) asparagine glycosylation. Residues L290, K295, and Y340 each coordinate GMP. Positions 295 and 340 each coordinate AMP. Positions 295 and 340 each coordinate CMP. Residue Y340 participates in dTMP binding. N-linked (GlcNAc...) asparagine glycosylation is present at N341. Position 376 (D376) interacts with AMP. Zn(2+) is bound by residues D376, H380, D423, and H424. CMP is bound at residue D376. Residue D376 coordinates dTMP. Residue D376 participates in GMP binding. Residue H380 coordinates 2',3'-cGAMP. H424 lines the AMP pocket. CMP is bound at residue H424. H424 is a dTMP binding site. H424 lines the GMP pocket. Disulfide bonds link C431–C530, C480–C868, C614–C672, C626–C726, C628–C711, and C838–C848. The N-linked (GlcNAc...) asparagine glycan is linked to N477. 2',3'-cGAMP is bound at residue S532. H535 contributes to the AMP binding site. Position 535 (H535) interacts with Zn(2+). H535 is a binding site for CMP. H535 is a dTMP binding site. H535 is a GMP binding site. N-linked (GlcNAc...) asparagine glycosylation is found at N585, N643, N700, N731, and N748. Positions 597–647 are linker; sequence NPVYTPKHPKEVHPLVQCPFTRNPRDNLGCSCNPSILPIEDFQTQFNLTVA. Residues 654-925 are nuclease-like domain; sequence HETLPYGRPR…THLPTFSQED (272 aa). Residues D800, D802, D804, R806, and D808 each coordinate Ca(2+).

This sequence belongs to the nucleotide pyrophosphatase/phosphodiesterase family. Homodimer. Interacts with INSR; leading to inhibit INSR autophosphorylation and subsequent activation of INSR kinase activity. As to quaternary structure, monomeric. The cofactor is Zn(2+). Post-translationally, autophosphorylated as part of the catalytic cycle of phosphodiesterase/pyrophosphatase activity. N-glycosylated. In terms of processing, the secreted form is produced through cleavage at Lys-103 by intracellular processing. In terms of tissue distribution, expressed in plasma cells and also in a number of non-lymphoid tissues, including the distal convoluted tubule of the kidney, chondrocytes and epididymis. Expressed in melanocytes but not in keratinocytes.

Its subcellular location is the cell membrane. The protein localises to the basolateral cell membrane. It is found in the secreted. It carries out the reaction Hydrolytically removes 5'-nucleotides successively from the 3'-hydroxy termini of 3'-hydroxy-terminated oligonucleotides.. The catalysed reaction is a ribonucleoside 5'-triphosphate + H2O = a ribonucleoside 5'-phosphate + diphosphate + H(+). It catalyses the reaction ATP + H2O = AMP + diphosphate + H(+). The enzyme catalyses UTP + H2O = UMP + diphosphate + H(+). It carries out the reaction GTP + H2O = GMP + diphosphate + H(+). The catalysed reaction is CTP + H2O = CMP + diphosphate + H(+). It catalyses the reaction 2',3'-cGAMP + 2 H2O = GMP + AMP + 2 H(+). The enzyme catalyses P(1),P(4)-bis(5'-adenosyl) tetraphosphate + H2O = AMP + ATP + 2 H(+). It carries out the reaction 3',5'-cyclic AMP + H2O = AMP + H(+). At low concentrations of ATP, a phosphorylated intermediate is formed which inhibits further hydrolysis. In terms of biological role, nucleotide pyrophosphatase that generates diphosphate (PPi) and functions in bone mineralization and soft tissue calcification by regulating pyrophosphate levels. PPi inhibits bone mineralization and soft tissue calcification by binding to nascent hydroxyapatite crystals, thereby preventing further growth of these crystals. Preferentially hydrolyzes ATP, but can also hydrolyze other nucleoside 5' triphosphates such as GTP, CTP and UTP to their corresponding monophosphates with release of pyrophosphate, as well as diadenosine polyphosphates, and also 3',5'-cAMP to AMP. May also be involved in the regulation of the availability of nucleotide sugars in the endoplasmic reticulum and Golgi, and the regulation of purinergic signaling. Inhibits ectopic joint calcification and maintains articular chondrocytes by repressing hedgehog signaling; it is however unclear whether hedgehog inhibition is direct or indirect. Appears to modulate insulin sensitivity and function. Also involved in melanogenesis. Also able to hydrolyze 2',3'-cGAMP (cyclic GMP-AMP), a second messenger that activates TMEM173/STING and triggers type-I interferon production. 2',3'-cGAMP degradation takes place in the lumen or extracellular space, and not in the cytosol where it is produced; the role of 2',3'-cGAMP hydrolysis is therefore unclear. Not able to hydrolyze the 2',3'-cGAMP linkage isomer 3'-3'-cGAMP. In Homo sapiens (Human), this protein is Ectonucleotide pyrophosphatase/phosphodiesterase family member 1.